Here is a 324-residue protein sequence, read N- to C-terminus: Beta-ketoacyl-[acyl-carrier-protein] synthase III (324 aa).

Catalysis depends on residues Cys112 and His251. The segment at 252 to 256 (QANLR) is ACP-binding. Asn281 is a catalytic residue.

It belongs to the thiolase-like superfamily. FabH family. Homodimer.

The protein resides in the cytoplasm. The enzyme catalyses malonyl-[ACP] + acetyl-CoA + H(+) = 3-oxobutanoyl-[ACP] + CO2 + CoA. The protein operates within lipid metabolism; fatty acid biosynthesis. In terms of biological role, catalyzes the condensation reaction of fatty acid synthesis by the addition to an acyl acceptor of two carbons from malonyl-ACP. Catalyzes the first condensation reaction which initiates fatty acid synthesis and may therefore play a role in governing the total rate of fatty acid production. Possesses both acetoacetyl-ACP synthase and acetyl transacylase activities. Its substrate specificity determines the biosynthesis of branched-chain and/or straight-chain of fatty acids. This chain is Beta-ketoacyl-[acyl-carrier-protein] synthase III, found in Clostridium perfringens (strain ATCC 13124 / DSM 756 / JCM 1290 / NCIMB 6125 / NCTC 8237 / Type A).